A 127-amino-acid polypeptide reads, in one-letter code: MCRCSADSSPVDVKDILNRLKSLSAAEEFFEALGVPYDPKVLDVSRLHIMKRMGQYLAAEDFSHLPDRVIAARARAILERAYCDFATSAPLSHRVFKVLKDHNPNRPVTPGRTVVPLDSFLKPFEKK.

The protein belongs to the NifW family. In terms of assembly, homotrimer; associates with NifD.

In terms of biological role, may protect the nitrogenase Fe-Mo protein from oxidative damage. This Rhizobium etli (strain ATCC 51251 / DSM 11541 / JCM 21823 / NBRC 15573 / CFN 42) protein is Nitrogenase-stabilizing/protective protein NifW.